A 234-amino-acid chain; its full sequence is Alpha N-terminal protein methyltransferase 1 (234 aa).

S-adenosyl-L-methionine is bound by residues Gly71, Arg76, 93–95 (DVV), 120–121 (LQ), and Gln136.

This sequence belongs to the methyltransferase superfamily. NTM1 family. Expressed in uterine cells and PVT neurons of the tail. Expressed in pharynx, intestine and DVB tail neuron.

The enzyme catalyses N-terminal L-alanyl-L-prolyl-L-lysyl-[protein] + 3 S-adenosyl-L-methionine = N-terminal N,N,N-trimethyl-L-alanyl-L-prolyl-L-lysyl-[protein] + 3 S-adenosyl-L-homocysteine + 3 H(+). It carries out the reaction N-terminal L-seryl-L-prolyl-L-lysyl-[protein] + 3 S-adenosyl-L-methionine = N-terminal N,N,N-trimethyl-L-seryl-L-prolyl-L-lysyl-[protein] + 3 S-adenosyl-L-homocysteine + 3 H(+). It catalyses the reaction N-terminal L-prolyl-L-prolyl-L-lysyl-[protein] + 2 S-adenosyl-L-methionine = N-terminal N,N-dimethyl-L-prolyl-L-prolyl-L-lysyl-[protein] + 2 S-adenosyl-L-homocysteine + 2 H(+). Functionally, alpha-N-methyltransferase that methylates the N-terminus of target proteins containing the N-terminal motif [Ala/Pro/Ser]-Pro-Lys when the initiator Met is cleaved. Specifically catalyzes mono-, di- or tri-methylation of exposed alpha-amino group of Ala or Ser residue in the [Ala/Ser]-Pro-Lys motif and mono- or di-methylation of Pro in the Pro-Pro-Lys motif. Probably required for the synthesis of neurotransmitter melatonin from serotonin, which plays a role in promoting a sleep-like state, called lethargus, during larval development. The chain is Alpha N-terminal protein methyltransferase 1 from Caenorhabditis elegans.